The following is a 371-amino-acid chain: Chaperone protein DnaJ (371 aa).

The 66-residue stretch at Asp6–Gly71 folds into the J domain. Residues Gly104–Ser123 form a disordered region. The CR-type zinc finger occupies Gly139–His217. Cys152, Cys155, Cys169, Cys172, Cys191, Cys194, Cys205, and Cys208 together coordinate Zn(2+). CXXCXGXG motif repeat units follow at residues Cys152–Gly159, Cys169–Gly176, Cys191–Gly198, and Cys205–Gly212.

It belongs to the DnaJ family. In terms of assembly, homodimer. Requires Zn(2+) as cofactor.

The protein resides in the cytoplasm. In terms of biological role, participates actively in the response to hyperosmotic and heat shock by preventing the aggregation of stress-denatured proteins and by disaggregating proteins, also in an autonomous, DnaK-independent fashion. Unfolded proteins bind initially to DnaJ; upon interaction with the DnaJ-bound protein, DnaK hydrolyzes its bound ATP, resulting in the formation of a stable complex. GrpE releases ADP from DnaK; ATP binding to DnaK triggers the release of the substrate protein, thus completing the reaction cycle. Several rounds of ATP-dependent interactions between DnaJ, DnaK and GrpE are required for fully efficient folding. Also involved, together with DnaK and GrpE, in the DNA replication of plasmids through activation of initiation proteins. This chain is Chaperone protein DnaJ, found in Bdellovibrio bacteriovorus (strain ATCC 15356 / DSM 50701 / NCIMB 9529 / HD100).